Here is a 471-residue protein sequence, read N- to C-terminus: Ribulose bisphosphate carboxylase large chain (471 aa).

Lys-5 bears the N6,N6,N6-trimethyllysine mark. Positions 114 and 164 each coordinate substrate. Lys-166 serves as the catalytic Proton acceptor. Lys-168 contributes to the substrate binding site. 3 residues coordinate Mg(2+): Lys-192, Asp-194, and Glu-195. Lys-192 is modified (N6-carboxylysine). Catalysis depends on His-285, which acts as the Proton acceptor. Substrate is bound by residues Arg-286, His-318, and Ser-370.

The protein belongs to the RuBisCO large chain family. Type I subfamily. In terms of assembly, heterohexadecamer of 8 large chains and 8 small chains; disulfide-linked. The disulfide link is formed within the large subunit homodimers. Requires Mg(2+) as cofactor. The disulfide bond which can form in the large chain dimeric partners within the hexadecamer appears to be associated with oxidative stress and protein turnover.

The protein localises to the plastid. It localises to the chloroplast. The catalysed reaction is 2 (2R)-3-phosphoglycerate + 2 H(+) = D-ribulose 1,5-bisphosphate + CO2 + H2O. It carries out the reaction D-ribulose 1,5-bisphosphate + O2 = 2-phosphoglycolate + (2R)-3-phosphoglycerate + 2 H(+). Functionally, ruBisCO catalyzes two reactions: the carboxylation of D-ribulose 1,5-bisphosphate, the primary event in carbon dioxide fixation, as well as the oxidative fragmentation of the pentose substrate in the photorespiration process. Both reactions occur simultaneously and in competition at the same active site. The polypeptide is Ribulose bisphosphate carboxylase large chain (Strychnos nux-vomica (Poison nut)).